The following is a 287-amino-acid chain: Oxaloacetate decarboxylase (287 aa).

Residue S50 participates in substrate binding. A Mg(2+)-binding site is contributed by D88. The substrate site is built by R159 and H235.

Belongs to the isocitrate lyase/PEP mutase superfamily. Oxaloacetate decarboxylase family. In terms of assembly, homotetramer; dimer of dimers. Mg(2+) is required as a cofactor.

It catalyses the reaction oxaloacetate + H(+) = pyruvate + CO2. Catalyzes the decarboxylation of oxaloacetate into pyruvate. Seems to play a role in maintaining cellular concentrations of bicarbonate and pyruvate. This Chromohalobacter salexigens (strain ATCC BAA-138 / DSM 3043 / CIP 106854 / NCIMB 13768 / 1H11) protein is Oxaloacetate decarboxylase.